Consider the following 460-residue polypeptide: Muscarinic acetylcholine receptor M1 (460 aa).

Topologically, residues 1 to 22 are extracellular; that stretch reads MNTSAPPAVSPNITVLAPGKGP. N-linked (GlcNAc...) asparagine glycans are attached at residues Asn-2 and Asn-12. The chain crosses the membrane as a helical span at residues 23–48; sequence WQVAFIGITTGLLSLATVTGNLLVLI. Over 49–62 the chain is Cytoplasmic; it reads SFKVNTELKTVNNY. A helical membrane pass occupies residues 63 to 84; it reads FLLSLACADLIIGTFSMNLYTT. The Extracellular segment spans residues 85-95; the sequence is YLLMGHWALGT. Residues 96–121 traverse the membrane as a helical segment; it reads LACDLWLALDYVASNASVMNLLLISF. A disulfide bond links Cys-98 and Cys-178. Topologically, residues 122–142 are cytoplasmic; the sequence is DRYFSVTRPLSYRAKRTPRRA. A helical membrane pass occupies residues 143-164; that stretch reads ALMIGLAWLVSFVLWAPAILFW. Residues 165-185 are Extracellular-facing; sequence QYLVGERTVLAGQCYIQFLSQ. A helical membrane pass occupies residues 186 to 209; that stretch reads PIITFGTAMAAFYLPVTVMCTLYW. Residues 210–366 are Cytoplasmic-facing; that stretch reads RIYRETENRA…LVKEKKAART (157 aa). Disordered stretches follow at residues 225–259, 273–297, and 310–351; these read LQGS…PGRC, SWKE…EEPG, and EAQA…QLAK. Thr-230 is subject to Phosphothreonine. Residues 238–247 show a composition bias toward low complexity; that stretch reads SSSSERSQPG. A compositionally biased stretch (basic residues) spans 328–343; the sequence is RPTKKGRDRAGKGQKP. The chain crosses the membrane as a helical span at residues 367–390; that stretch reads LSAILLAFILTWTPYNIMVLVSTF. Topologically, residues 391-401 are extracellular; the sequence is CKDCVPETLWE. Residues 402–420 form a helical membrane-spanning segment; the sequence is LGYWLCYVNSTINPMCYAL. The Cytoplasmic segment spans residues 421 to 460; it reads CNKAFRDTFRLLLLCRWDKRRWRKIPKRPGSVHRTPSRQC. Thr-428 is modified (phosphothreonine). Ser-451 carries the post-translational modification Phosphoserine. Thr-455 is subject to Phosphothreonine. The residue at position 457 (Ser-457) is a Phosphoserine.

This sequence belongs to the G-protein coupled receptor 1 family. Muscarinic acetylcholine receptor subfamily. CHRM1 sub-subfamily. In terms of assembly, interacts with GPRASP2. Interacts with TMEM147.

It is found in the cell membrane. It localises to the postsynaptic cell membrane. Functionally, the muscarinic acetylcholine receptor mediates various cellular responses, including inhibition of adenylate cyclase, breakdown of phosphoinositides and modulation of potassium channels through the action of G proteins. Primary transducing effect is Pi turnover. This is Muscarinic acetylcholine receptor M1 (CHRM1) from Macaca mulatta (Rhesus macaque).